The following is a 432-amino-acid chain: Adenylosuccinate synthetase (432 aa).

Residues 12–18 (GDEGKGK) and 40–42 (GHT) contribute to the GTP site. Residue Asp13 is the Proton acceptor of the active site. Asp13 and Gly40 together coordinate Mg(2+). Residues 13 to 16 (DEGK), 38 to 41 (NAGH), Thr132, Arg146, Gln226, Thr241, and Arg305 contribute to the IMP site. Residue His41 is the Proton donor of the active site. 301 to 307 (TVTGRKR) is a substrate binding site. Residues Arg307, 333-335 (KLD), and 415-417 (STS) each bind GTP.

The protein belongs to the adenylosuccinate synthetase family. As to quaternary structure, homodimer. The cofactor is Mg(2+).

It localises to the cytoplasm. It carries out the reaction IMP + L-aspartate + GTP = N(6)-(1,2-dicarboxyethyl)-AMP + GDP + phosphate + 2 H(+). Its pathway is purine metabolism; AMP biosynthesis via de novo pathway; AMP from IMP: step 1/2. Functionally, plays an important role in the de novo pathway of purine nucleotide biosynthesis. Catalyzes the first committed step in the biosynthesis of AMP from IMP. The polypeptide is Adenylosuccinate synthetase (Chelativorans sp. (strain BNC1)).